A 326-amino-acid chain; its full sequence is ATP phosphoribosyltransferase regulatory subunit (326 aa).

Belongs to the class-II aminoacyl-tRNA synthetase family. HisZ subfamily. Heteromultimer composed of HisG and HisZ subunits.

The protein resides in the cytoplasm. It participates in amino-acid biosynthesis; L-histidine biosynthesis; L-histidine from 5-phospho-alpha-D-ribose 1-diphosphate: step 1/9. In terms of biological role, required for the first step of histidine biosynthesis. May allow the feedback regulation of ATP phosphoribosyltransferase activity by histidine. The chain is ATP phosphoribosyltransferase regulatory subunit from Streptococcus thermophilus (strain ATCC BAA-491 / LMD-9).